We begin with the raw amino-acid sequence, 287 residues long: Glycine--tRNA ligase alpha subunit (287 aa).

Belongs to the class-II aminoacyl-tRNA synthetase family. As to quaternary structure, tetramer of two alpha and two beta subunits.

The protein localises to the cytoplasm. It carries out the reaction tRNA(Gly) + glycine + ATP = glycyl-tRNA(Gly) + AMP + diphosphate. This is Glycine--tRNA ligase alpha subunit from Campylobacter jejuni subsp. jejuni serotype O:6 (strain 81116 / NCTC 11828).